The chain runs to 67 residues: ATCSAVQLSPCLAAITKNTPPSAACCNKLKEQKPCLCGYLKDPNLKNYVNSPGARKTASSCGVALKC.

Intrachain disulfides connect Cys3–Cys35, Cys11–Cys25, Cys26–Cys61, and Cys37–Cys67.

It belongs to the plant LTP family. Monomer. Post-translationally, disulfide bonds.

Its function is as follows. Plant non-specific lipid-transfer proteins transfer phospholipids as well as galactolipids across membranes. May play a role in wax or cutin deposition in the cell walls of expanding epidermal cells and certain secretory tissues. The protein is Non-specific lipid-transfer protein 2 of Apium graveolens var. rapaceum (Celeriac).